Consider the following 133-residue polypeptide: Ribosomal silencing factor RsfS (133 aa).

The protein belongs to the Iojap/RsfS family. In terms of assembly, interacts with ribosomal protein uL14 (rplN).

It localises to the cytoplasm. In terms of biological role, functions as a ribosomal silencing factor. Interacts with ribosomal protein uL14 (rplN), blocking formation of intersubunit bridge B8. Prevents association of the 30S and 50S ribosomal subunits and the formation of functional ribosomes, thus repressing translation. The chain is Ribosomal silencing factor RsfS from Zymomonas mobilis subsp. mobilis (strain ATCC 31821 / ZM4 / CP4).